Reading from the N-terminus, the 193-residue chain is Xanthine phosphoribosyltransferase (193 aa).

The xanthine site is built by L20 and T27. 128-132 (ANGQA) is a 5-phospho-alpha-D-ribose 1-diphosphate binding site. K156 serves as a coordination point for xanthine.

The protein belongs to the purine/pyrimidine phosphoribosyltransferase family. Xpt subfamily. Homodimer.

The protein localises to the cytoplasm. The catalysed reaction is XMP + diphosphate = xanthine + 5-phospho-alpha-D-ribose 1-diphosphate. Its pathway is purine metabolism; XMP biosynthesis via salvage pathway; XMP from xanthine: step 1/1. Functionally, converts the preformed base xanthine, a product of nucleic acid breakdown, to xanthosine 5'-monophosphate (XMP), so it can be reused for RNA or DNA synthesis. In Streptococcus pneumoniae serotype 2 (strain D39 / NCTC 7466), this protein is Xanthine phosphoribosyltransferase.